Here is a 162-residue protein sequence, read N- to C-terminus: Caveolin-2 (162 aa).

The Cytoplasmic portion of the chain corresponds to 1-86 (MGLETEKADV…FEISKYIIYK (86 aa)). At tyrosine 19 the chain carries Phosphotyrosine; by SRC. Phosphoserine occurs at positions 20 and 23. At tyrosine 27 the chain carries Phosphotyrosine; by SRC. The segment at residues 87–107 (FLTVFLAIPLAFAAGILFATL) is an intramembrane region (helical). Residues 108–162 (SCLHIWITMPFVKTCLMVLPSVQTIWKSVTDVAIAPLCTSVGRSFSSVSLQLSHD) are Cytoplasmic-facing.

It belongs to the caveolin family. Monomer or homodimer. Interacts with CAV1; the interaction forms a stable heterooligomeric complex that is required for targeting to lipid rafts and for caveolae formation. Tyrosine phosphorylated forms do not form heterooligomers with the Tyr-19-phosphorylated form existing as a monomer or dimer, and the Tyr-27-form as a monomer only. Interacts (tyrosine phosphorylated form) with the SH2 domain-containing proteins, RASA1, NCK1 and SRC. Interacts (tyrosine phosphorylated form) with INSR, the interaction (Tyr-27-phosphorylated form) is increased on insulin stimulation. Interacts (Tyr-19 phosphorylated form) with MAPK1 (phosphorylated form); the interaction, promoted by insulin, leads to nuclear location and MAPK1 activation. Interacts with STAT3; the interaction is increased on insulin-induced tyrosine phosphorylation leading to STAT activation. In terms of processing, phosphorylated on serine and tyrosine residues. CAV1 promotes phosphorylation on Ser-23 which then targets the complex to the plasma membrane, lipid rafts and caveolae. Phosphorylation on both Tyr-19 and Tyr-27 is required for insulin-induced 'Ser-727' phosphorylation of STAT3 and its activation. Phosphorylation on Tyr-19 is required for insulin-induced phosphorylation of MAPK1 and DNA binding of STAT3. Tyrosine phosphorylation is induced by both EGF and insulin.

The protein localises to the nucleus. It is found in the cytoplasm. Its subcellular location is the golgi apparatus membrane. The protein resides in the cell membrane. It localises to the membrane. The protein localises to the caveola. May act as a scaffolding protein within caveolar membranes. Interacts directly with G-protein alpha subunits and can functionally regulate their activity. Acts as an accessory protein in conjunction with CAV1 in targeting to lipid rafts and driving caveolae formation. Positive regulator of cellular mitogenesis of the MAPK signaling pathway. Required for the insulin-stimulated nuclear translocation and activation of MAPK1 and STAT3, and the subsequent regulation of cell cycle progression. In Dasypus novemcinctus (Nine-banded armadillo), this protein is Caveolin-2 (CAV2).